A 325-amino-acid polypeptide reads, in one-letter code: Solute-binding protein RD1_1052 (325 aa).

The signal sequence occupies residues methionine 1–alanine 26. D-mannonate contacts are provided by residues glutamate 75, glycine 93 to serine 95, arginine 148 to arginine 151, arginine 171, and asparagine 211. L-galactonate contacts are provided by residues glutamate 75, glycine 93–serine 95, arginine 148–arginine 151, arginine 171, and asparagine 211.

Belongs to the bacterial solute-binding protein 7 family. In terms of assembly, the complex is comprised of an extracytoplasmic solute-binding protein and a heteromeric permease formed by two transmembrane proteins.

It is found in the periplasm. Solute-binding protein that binds L-galactonate and D-mannonate (in vitro). Probably part of a tripartite ATP-independent periplasmic (TRAP) transport system that mediates solute transport into the cytoplasm. The chain is Solute-binding protein RD1_1052 from Roseobacter denitrificans (strain ATCC 33942 / OCh 114) (Erythrobacter sp. (strain OCh 114)).